The chain runs to 284 residues: 2-dehydro-3-deoxyphosphooctonate aldolase (284 aa).

It belongs to the KdsA family.

It localises to the cytoplasm. The catalysed reaction is D-arabinose 5-phosphate + phosphoenolpyruvate + H2O = 3-deoxy-alpha-D-manno-2-octulosonate-8-phosphate + phosphate. It participates in carbohydrate biosynthesis; 3-deoxy-D-manno-octulosonate biosynthesis; 3-deoxy-D-manno-octulosonate from D-ribulose 5-phosphate: step 2/3. The protein operates within bacterial outer membrane biogenesis; lipopolysaccharide biosynthesis. In Methylobacterium radiotolerans (strain ATCC 27329 / DSM 1819 / JCM 2831 / NBRC 15690 / NCIMB 10815 / 0-1), this protein is 2-dehydro-3-deoxyphosphooctonate aldolase.